Consider the following 256-residue polypeptide: MNDLLTIGDKTFRSRLFTGTGKFPNASVMQKALIESGSELSTMALKRVEVNNPEDNILKPIVDAGINLLPNTSGAKNAREAIFAAQLAREALGTNWLKLEIHPDPKYLMPDPIETLTAAEELVKQGFIVLPYCHADPVLCKRLEEVGCAAVMPLGAPIGSNKGIVSRDFLEIIIDQARVPVVVDAGIGAPSHAALAMELGADAVLVNTAIAAARNPIAMATAFKLAVQSGRLAYENGLAAVNTQAVASSPLTAFLD.

K98 functions as the Schiff-base intermediate with DXP in the catalytic mechanism. Residues G159, 185–186, and 207–208 each bind 1-deoxy-D-xylulose 5-phosphate; these read AG and NT.

Belongs to the ThiG family. In terms of assembly, homotetramer. Forms heterodimers with either ThiH or ThiS.

The protein localises to the cytoplasm. The catalysed reaction is [ThiS sulfur-carrier protein]-C-terminal-Gly-aminoethanethioate + 2-iminoacetate + 1-deoxy-D-xylulose 5-phosphate = [ThiS sulfur-carrier protein]-C-terminal Gly-Gly + 2-[(2R,5Z)-2-carboxy-4-methylthiazol-5(2H)-ylidene]ethyl phosphate + 2 H2O + H(+). It functions in the pathway cofactor biosynthesis; thiamine diphosphate biosynthesis. Its function is as follows. Catalyzes the rearrangement of 1-deoxy-D-xylulose 5-phosphate (DXP) to produce the thiazole phosphate moiety of thiamine. Sulfur is provided by the thiocarboxylate moiety of the carrier protein ThiS. In vitro, sulfur can be provided by H(2)S. This Aliivibrio fischeri (strain MJ11) (Vibrio fischeri) protein is Thiazole synthase.